A 596-amino-acid chain; its full sequence is Estrogen receptor (596 aa).

The segment at 1–185 is modulating (transactivation AF-1); mediates interaction with MACROD1; that stretch reads MTMTLHTKAS…AMESAKETRY (185 aa). O-linked (GlcNAc) serine glycosylation is present at serine 10. Residues 36–48 are required for interaction with NCOA1; that stretch reads ERPLGEVYMDSSK. Positions 36–175 are interaction with DDX5; self-association; that stretch reads ERPLGEVYMD…LASTSDKGSM (140 aa). Phosphoserine; by CDK2 occurs at positions 104 and 106. Serine 119 carries the phosphoserine modification. The tract at residues 144 to 175 is disordered; that stretch reads EAGPPAYYRPNSDNRRQGGRERLASTSDKGSM. A compositionally biased stretch (basic and acidic residues) spans 155-166; the sequence is SDNRRQGGRERL. Serine 168 carries the phosphoserine; by CK2 modification. 2 consecutive NR C4-type zinc fingers follow at residues 186–206 and 222–246; these read CAVC…CEGC and CPAT…LRKC. Positions 186–251 form a DNA-binding region, nuclear receptor; the sequence is CAVCNDYASG…RLRKCYEVGM (66 aa). Residues 186-311 form a mediates interaction with DNTTIP2 region; sequence CAVCNDYASG…TKKNSPVLSL (126 aa). Positions 252 to 311 are hinge; the sequence is MKGGIRKDRRGGRMLKHKRQRDDGEGRNEAVPSGDMRAANLWPSPIMIKHTKKNSPVLSL. Residues 259–270 are compositionally biased toward basic residues; it reads DRRGGRMLKHKR. Positions 259-285 are disordered; the sequence is DRRGGRMLKHKRQRDDGEGRNEAVPSG. At arginine 261 the chain carries Asymmetric dimethylarginine; by PRMT1. The segment at 263-596 is interaction with AKAP13; the sequence is GRMLKHKRQR…GEAENFPSTV (334 aa). Residues 265 to 595 are self-association; the sequence is MLKHKRQRDD…TGEAENFPST (331 aa). Residues 312 to 548 enclose the NR LBD domain; sequence TADQMISALL…DLLLEMLDAH (237 aa). Positions 312 to 595 are transactivation AF-2; that stretch reads TADQMISALL…TGEAENFPST (284 aa). 2 residues coordinate 17beta-estradiol: glutamate 354 and arginine 395. Cysteine 448 carries S-palmitoyl cysteine lipidation. Residue histidine 525 participates in 17beta-estradiol binding. Position 538 is a phosphotyrosine; by Tyr-kinases (tyrosine 538). O-linked (GlcNAc) threonine glycosylation is present at threonine 572.

Belongs to the nuclear hormone receptor family. NR3 subfamily. Binds DNA as a homodimer. Can form a heterodimer with ESR2. Interacts with coactivator NCOA5. Interacts with PELP1, the interaction is enhanced by 17-beta-estradiol; the interaction increases ESR1 transcriptional activity. Interacts with NCOA7; the interaction is ligand-inducible. Interacts with AKAP13, CUEDC2, HEXIM1, KDM5A, MAP1S, SMARD1, and UBE1C. Interacts with MUC1; the interaction is stimulated by 7 beta-estradiol (E2) and enhances ESR1-mediated transcription. Interacts with DNTTIP2, and UIMC1. Interacts with KMT2D/MLL2. Interacts with ATAD2; the interaction is enhanced by estradiol. Interacts with KIF18A and LDB1. Interacts with RLIM (via its C-terminus). Interacts with MACROD1. Interacts with SH2D4A and PLCG. Interacts with SH2D4A; the interaction blocks binding to PLCG and inhibits estrogen-induced cell proliferation. Interacts with DYNLL1. Interacts with CCDC62; the interaction requires estradiol and appears to enhance the transcription of target genes. Interacts with NR2C1; the interaction prevents homodimerization of ESR1 and suppresses its transcriptional activity and cell growth. Interacts with DNAAF4. Interacts with PRMT2. Interacts with RBFOX2. Interacts with EP300; the interaction is estrogen-dependent and enhanced by CITED1. Interacts with CITED1; the interaction is estrogen-dependent. Interacts with FAM120B, FOXL2, PHB2 and SLC30A9. Interacts with coactivators NCOA3 and NCOA6. Interacts with STK3/MST2 only in the presence of SAV1 and vice-versa. Binds to CSNK1D. Interacts with NCOA2; NCOA2 can interact with ESR1 AF-1 and AF-2 domains simultaneously and mediate their transcriptional synergy. Interacts with DDX5. Interacts with NCOA1; the interaction seems to require a self-association of N-terminal and C-terminal regions. Interacts with ZNF366, DDX17, NFKB1, RELA, SP1 and SP3. Interacts with NRIP1. Interacts with GPER1; the interaction occurs in an estrogen-dependent manner. Interacts with CLOCK and the interaction is stimulated by estrogen. Interacts with TRIP4 (ufmylated); estrogen dependent. Interacts with LMTK3; the interaction phosphorylates ESR1 (in vitro) and protects it against proteasomal degradation. Interacts with CCAR2 (via N-terminus) in a ligand-independent manner. Interacts with ZFHX3. Interacts with SFR1 in a ligand-dependent and -independent manner. Interacts with DCAF13, LATS1 and DCAF1; regulates ESR1 ubiquitination and ubiquitin-mediated proteasomal degradation. Interacts (via DNA-binding domain) with POU4F2 (C-terminus); this interaction increases the estrogen receptor ESR1 transcriptional activity in a DNA- and ligand 17-beta-estradiol-independent manner. Interacts with ESRRB isoform 1. Interacts with UBE3A and WBP2. Interacts with GTF2B. Interacts with RBM39. In the absence of hormonal ligand, interacts with TACC1. Interacts with PI3KR1 or PI3KR2 and PTK2/FAK1. Interacts with SRC. Interacts with BAG1; the interaction is promoted in the absence of estradiol (17-beta-estradiol/E2). Interacts with and ubiquitinated by STUB1; the interaction is promoted in the absence of estradiol (17-beta-estradiol/E2). Interacts with NEDD8. In terms of processing, glycosylated; contains N-acetylglucosamine, probably O-linked. Post-translationally, ubiquitinated; regulated by LATS1 via DCAF1 it leads to ESR1 proteasomal degradation. Deubiquitinated by OTUB1. Ubiquitinated by STUB1/CHIP; in the CA1 hippocampal region following loss of endogenous circulating estradiol (17-beta-estradiol/E2). Ubiquitinated by UBR5, leading to its degradation: UBR5 specifically recognizes and binds ligand-bound ESR1 when it is not associated with coactivators (NCOAs). In presence of NCOAs, the UBR5-degron is not accessible, preventing its ubiquitination and degradation. Phosphorylated by cyclin A/CDK2 and CK1. Phosphorylation probably enhances transcriptional activity. Dephosphorylation at Ser-119 by PPP5C inhibits its transactivation activity. Phosphorylated by LMTK3 (in vitro). In terms of processing, palmitoylated at Cys-448 by ZDHHC7 and ZDHHC21. Palmitoylation is required for plasma membrane targeting and for rapid intracellular signaling via ERK and AKT kinases and cAMP generation, but not for signaling mediated by the nuclear hormone receptor. Post-translationally, dimethylated by PRMT1 at Arg-261. The methylation may favor cytoplasmic localization. Demethylated by JMJD6 at Arg-261.

The protein resides in the nucleus. Its subcellular location is the cytoplasm. It localises to the golgi apparatus. It is found in the cell membrane. Nuclear hormone receptor. The steroid hormones and their receptors are involved in the regulation of eukaryotic gene expression and affect cellular proliferation and differentiation in target tissues. Ligand-dependent nuclear transactivation involves either direct homodimer binding to a palindromic estrogen response element (ERE) sequence or association with other DNA-binding transcription factors, such as AP-1/c-Jun, c-Fos, ATF-2, Sp1 and Sp3, to mediate ERE-independent signaling. Ligand binding induces a conformational change allowing subsequent or combinatorial association with multiprotein coactivator complexes through LXXLL motifs of their respective components. Mutual transrepression occurs between the estrogen receptor (ER) and NF-kappa-B in a cell-type specific manner. Decreases NF-kappa-B DNA-binding activity and inhibits NF-kappa-B-mediated transcription from the IL6 promoter and displace RELA/p65 and associated coregulators from the promoter. Recruited to the NF-kappa-B response element of the CCL2 and IL8 promoters and can displace CREBBP. Present with NF-kappa-B components RELA/p65 and NFKB1/p50 on ERE sequences. Can also act synergistically with NF-kappa-B to activate transcription involving respective recruitment adjacent response elements; the function involves CREBBP. Can activate the transcriptional activity of TFF1. Also mediates membrane-initiated estrogen signaling involving various kinase cascades. Essential for MTA1-mediated transcriptional regulation of BRCA1 and BCAS3. Maintains neuronal survival in response to ischemic reperfusion injury when in the presence of circulating estradiol (17-beta-estradiol/E2). This is Estrogen receptor (ESR1) from Bos taurus (Bovine).